The primary structure comprises 146 residues: Hemoglobin cathodic subunit beta (146 aa).

The region spanning 2-146 (EWSASERSTI…VVSALSKQYF (145 aa)) is the Globin domain. His63 and His92 together coordinate heme b.

This sequence belongs to the globin family. In terms of assembly, heterotetramer of two alpha chains and two beta chains. In terms of tissue distribution, red blood cells.

Involved in oxygen transport from gills to the various peripheral tissues. This Anguilla anguilla (European freshwater eel) protein is Hemoglobin cathodic subunit beta (hbb2).